Reading from the N-terminus, the 394-residue chain is Putative gustatory receptor 22a (394 aa).

Residues 1–16 lie on the Cytoplasmic side of the membrane; sequence MSQPKRIHRICKGLAR. The helical transmembrane segment at 17-37 threads the bilayer; it reads FTIRATLYGSWVLGLFPFTFD. Residues 38–47 are Extracellular-facing; sequence SRKRRLNRSK. A glycan (N-linked (GlcNAc...) asparagine) is linked at N44. A helical membrane pass occupies residues 48-68; that stretch reads WLLAYGLVLNLTLLVLSMLPS. The Cytoplasmic segment spans residues 69–148; sequence TDDHNSVKVE…HTFNRYVIEK (80 aa). The helical transmembrane segment at 149–169 threads the bilayer; it reads GLVIILEIGSSLVLYFGIPNS. Position 170 (K170) is a topological domain, extracellular. A helical membrane pass occupies residues 171–191; sequence IVVYEAVCIYIVQLEVLMVVM. The Cytoplasmic portion of the chain corresponds to 192–256; that stretch reads HFHLAVIYIY…TAIYDIQVTL (65 aa). A helical transmembrane segment spans residues 257–277; that stretch reads FMATLFSVNIIVGHVLVICWI. N278 carries N-linked (GlcNAc...) asparagine glycosylation. At 278–281 the chain is on the extracellular side; sequence NITR. A helical transmembrane segment spans residues 282–302; it reads FSLLVIFLLFPQALIINFWDL. Topologically, residues 303–361 are cytoplasmic; sequence WQGIAFCDLAESTGKKTSMILKLFNDMENMDQETERRVTEFTLFCSHRRLKVCHLGLLD. Residues 362 to 382 form a helical membrane-spanning segment; the sequence is INYEMGFRMIITNILYVVFLV. At 383–394 the chain is on the extracellular side; it reads QFDYMNLKFKTD.

It belongs to the insect chemoreceptor superfamily. Gustatory receptor (GR) family. Gr22e subfamily. In terms of tissue distribution, expressed in neurons of the terminal external chemosensory organ of larvae.

It is found in the cell membrane. Probable gustatory receptor which mediates acceptance or avoidance behavior, depending on its substrates. In Drosophila melanogaster (Fruit fly), this protein is Putative gustatory receptor 22a (Gr22a).